The chain runs to 322 residues: Sideroflexin-1 (322 aa).

Residue Ser2 is modified to N-acetylserine. Residues 2–102 (SGEVPPNINI…MSAQVPMNMT (101 aa)) are Mitochondrial matrix-facing. The chain crosses the membrane as a helical span at residues 103-120 (ITGCMMTFYRTTPAVLFW). Residues 121–146 (QWINQSFNAVVNYTNRSGDAPLTVNE) are Mitochondrial intermembrane-facing. The helical transmembrane segment at 147 to 167 (LGTAYVSATTGAVATALGLNA) threads the bilayer. The Mitochondrial matrix segment spans residues 168–174 (LTKHVSP). A helical membrane pass occupies residues 175 to 195 (LIGRFVPFAAVAAANCINIPL). Over 196-228 (MRQRELKVGIPVTDENGTRLGESTNAAKQAITQ) the chain is Mitochondrial intermembrane. A helical transmembrane segment spans residues 229 to 249 (VVISRILMAAPGMAIPPFIMN). The Mitochondrial matrix portion of the chain corresponds to 250-266 (TLEKKAFLKRFPWMSAP). The chain crosses the membrane as a helical span at residues 267-287 (IQVTLVGFCLVFATPLCCALF). Residues 288–322 (PQKSSMSVTSLEDDLQASIQKSHPELRRVYFNKGL) lie on the Mitochondrial intermembrane side of the membrane.

The protein belongs to the sideroflexin family.

It localises to the mitochondrion inner membrane. It catalyses the reaction L-serine(in) = L-serine(out). The enzyme catalyses L-alanine(in) = L-alanine(out). The catalysed reaction is L-cysteine(in) = L-cysteine(out). In terms of biological role, amino acid transporter importing serine, an essential substrate of the mitochondrial branch of the one-carbon pathway, into mitochondria. Mitochondrial serine is then converted to glycine and formate, which exits to the cytosol where it is used to generate the charged folates that serve as one-carbon donors. May also transport other amino acids including alanine and cysteine. This chain is Sideroflexin-1 (Sfxn1), found in Rattus norvegicus (Rat).